The sequence spans 348 residues: Dihydroorotate dehydrogenase (quinone) (348 aa).

FMN is bound by residues 65–69 (AGLDK) and T89. K69 lines the substrate pocket. 114–118 (NRLGF) contacts substrate. N147 and N180 together coordinate FMN. N180 is a substrate binding site. Residue S183 is the Nucleophile of the active site. N185 lines the substrate pocket. Residues K225 and T253 each coordinate FMN. 254–255 (NT) contributes to the substrate binding site. FMN-binding positions include G276, G305, and 326–327 (YS).

Belongs to the dihydroorotate dehydrogenase family. Type 2 subfamily. Monomer. FMN is required as a cofactor.

Its subcellular location is the cell membrane. It carries out the reaction (S)-dihydroorotate + a quinone = orotate + a quinol. It participates in pyrimidine metabolism; UMP biosynthesis via de novo pathway; orotate from (S)-dihydroorotate (quinone route): step 1/1. Its function is as follows. Catalyzes the conversion of dihydroorotate to orotate with quinone as electron acceptor. The sequence is that of Dihydroorotate dehydrogenase (quinone) from Delftia acidovorans (strain DSM 14801 / SPH-1).